Here is a 1480-residue protein sequence, read N- to C-terminus: Cystic fibrosis transmembrane conductance regulator (1480 aa).

At methionine 1–phenylalanine 77 the chain is on the cytoplasmic side. A helical membrane pass occupies residues phenylalanine 78–glutamine 98. One can recognise an ABC transmembrane type-1 1 domain in the interval phenylalanine 81 to leucine 365. At proline 99–tyrosine 122 the chain is on the extracellular side. Residues leucine 123 to histidine 146 form a helical membrane-spanning segment. Residues histidine 147–leucine 195 are Cytoplasmic-facing. Residues alanine 196–tryptophan 216 form a helical membrane-spanning segment. Topologically, residues glutamate 217 to serine 222 are extracellular. The chain crosses the membrane as a helical span at residues alanine 223–methionine 243. The Cytoplasmic portion of the chain corresponds to methionine 244 to lysine 298. A helical membrane pass occupies residues alanine 299–phenylalanine 319. Over leucine 320–threonine 339 the chain is Extracellular. The helical transmembrane segment at isoleucine 340–valine 358 threads the bilayer. Residues glutamine 359–serine 858 lie on the Cytoplasmic side of the membrane. ATP-binding positions include tryptophan 401, serine 434, glycine 458–threonine 465, and glutamine 493. The ABC transporter 1 domain maps to asparagine 423–glycine 646. Cysteine 524 carries S-palmitoyl cysteine lipidation. Phosphoserine occurs at positions 549 and 660. The tract at residues serine 654 to glutamate 831 is disordered R region. The residue at position 670 (serine 670) is a Phosphoserine; by PKA. Position 686 is a phosphoserine (serine 686). A Glycyl lysine isopeptide (Lys-Gly) (interchain with G-Cter in ubiquitin) cross-link involves residue lysine 688. A phosphoserine mark is found at serine 700 and serine 712. Residue threonine 717 is modified to Phosphothreonine. A phosphoserine mark is found at serine 737, serine 753, serine 768, serine 790, serine 795, and serine 813. A helical membrane pass occupies residues leucine 859–valine 879. The ABC transmembrane type-1 2 domain occupies leucine 859–serine 1155. The Extracellular portion of the chain corresponds to valine 880–isoleucine 918. Residues asparagine 894 and asparagine 900 are each glycosylated (N-linked (GlcNAc...) asparagine). Residues tyrosine 919–histidine 939 traverse the membrane as a discontinuously helical segment. Residues threonine 940 to threonine 990 lie on the Cytoplasmic side of the membrane. The chain crosses the membrane as a helical span at residues isoleucine 991–leucine 1011. Residues glutamine 1012–proline 1013 lie on the Extracellular side of the membrane. A helical transmembrane segment spans residues tyrosine 1014–leucine 1034. The Cytoplasmic segment spans residues glutamine 1035–threonine 1095. Residues leucine 1096–phenylalanine 1116 form a helical membrane-spanning segment. At isoleucine 1117 to glycine 1130 the chain is on the extracellular side. A helical membrane pass occupies residues isoleucine 1131–isoleucine 1151. The Cytoplasmic portion of the chain corresponds to aspartate 1152–leucine 1480. Residues methionine 1210 to proline 1443 enclose the ABC transporter 2 domain. ATP-binding positions include tyrosine 1219 and glycine 1244 to serine 1251. The tract at residues arginine 1386–leucine 1480 is interaction with GORASP2. Cysteine 1395 carries the S-palmitoyl cysteine lipid modification. Phosphoserine is present on residues serine 1444 and serine 1456. Positions proline 1451–leucine 1480 are disordered. The span at glutamate 1470 to leucine 1480 shows a compositional bias: acidic residues. The PDZ-binding motif lies at threonine 1478–leucine 1480.

This sequence belongs to the ABC transporter superfamily. ABCC family. CFTR transporter (TC 3.A.1.202) subfamily. As to quaternary structure, monomer; does not require oligomerization for channel activity. May form oligomers in the membrane. Interacts with SLC26A3, SLC26A6 and NHERF1. Interacts with SHANK2. Interacts with MYO6. Interacts (via C-terminus) with GOPC (via PDZ domain); this promotes CFTR internalization and thereby decreases channel activity. Interacts with SLC4A7 through NHERF1. Found in a complex with MYO5B and RAB11A. Interacts with ANO1. Interacts with SLC26A8. Interacts with AHCYL1; the interaction increases CFTR activity. Interacts with CSE1L. The core-glycosylated form interacts with GORASP2 (via PDZ GRASP-type 1 domain) in respone to ER stress. Interacts with MARCHF2; the interaction leads to CFTR ubiqtuitination and degradation. Interacts with ADGRG2. N-glycosylated. In terms of processing, phosphorylated; cAMP treatment promotes phosphorylation and activates the channel. Dephosphorylation decreases the ATPase activity (in vitro). Phosphorylation at PKA sites activates the channel. Phosphorylation at PKC sites enhances the response to phosphorylation by PKA. Phosphorylated by AMPK; this inhibits channel activity. Post-translationally, ubiquitinated, leading to its degradation in the lysosome. Deubiquitination by USP10 in early endosomes enhances its endocytic recycling to the cell membrane. Ubiquitinated by RNF185 during ER stress. Ubiquitinated by MARCHF2.

It localises to the apical cell membrane. Its subcellular location is the early endosome membrane. The protein resides in the cell membrane. The protein localises to the recycling endosome membrane. It is found in the endoplasmic reticulum membrane. It localises to the nucleus. The enzyme catalyses ATP + H2O + closed Cl(-) channel = ADP + phosphate + open Cl(-) channel.. It carries out the reaction chloride(in) = chloride(out). It catalyses the reaction hydrogencarbonate(in) = hydrogencarbonate(out). The catalysed reaction is ATP + H2O = ADP + phosphate + H(+). Its function is as follows. Epithelial ion channel that plays an important role in the regulation of epithelial ion and water transport and fluid homeostasis. Mediates the transport of chloride ions across the cell membrane. Possesses an intrinsic ATPase activity and utilizes ATP to gate its channel; the passive flow of anions through the channel is gated by cycles of ATP binding and hydrolysis by the ATP-binding domains. The ion channel is also permeable to HCO(3)(-); selectivity depends on the extracellular chloride concentration. Exerts its function also by modulating the activity of other ion channels and transporters. Contributes to the regulation of the pH and the ion content of the epithelial fluid layer. Modulates the activity of the epithelial sodium channel (ENaC) complex, in part by regulating the cell surface expression of the ENaC complex. May regulate bicarbonate secretion and salvage in epithelial cells by regulating the transporter SLC4A7. Can inhibit the chloride channel activity of ANO1. Plays a role in the chloride and bicarbonate homeostasis during sperm epididymal maturation and capacitation. This chain is Cystic fibrosis transmembrane conductance regulator, found in Nomascus leucogenys (Northern white-cheeked gibbon).